The chain runs to 335 residues: Tryptophan--tRNA ligase (335 aa).

ATP-binding positions include 9-11 and 17-18; these read QST and GN. A 'HIGH' region motif is present at residues 10–18; sequence STNSLTLGN. Aspartate 137 lines the L-tryptophan pocket. Residues 149-151, isoleucine 189, and 198-202 each bind ATP; these read GKD and KMSKS. A 'KMSKS' region motif is present at residues 198–202; it reads KMSKS.

It belongs to the class-I aminoacyl-tRNA synthetase family. Homodimer.

It localises to the cytoplasm. It carries out the reaction tRNA(Trp) + L-tryptophan + ATP = L-tryptophyl-tRNA(Trp) + AMP + diphosphate + H(+). Functionally, catalyzes the attachment of tryptophan to tRNA(Trp). The protein is Tryptophan--tRNA ligase of Malacoplasma penetrans (strain HF-2) (Mycoplasma penetrans).